Here is a 1592-residue protein sequence, read N- to C-terminus: ABC transporter ATP-binding protein/permease VMR1 (1592 aa).

At Met1 to Leu33 the chain is on the vacuolar side. A glycan (N-linked (GlcNAc...) asparagine) is linked at Asn11. Residues Pro34–Tyr54 form a helical membrane-spanning segment. Over Val55–Arg74 the chain is Cytoplasmic. A helical transmembrane segment spans residues Lys75–Asn95. Over Val96–Gly100 the chain is Vacuolar. The chain crosses the membrane as a helical span at residues Arg101–Lys121. The Cytoplasmic segment spans residues Asn122–Pro131. Residues Ser132–Gly152 form a helical membrane-spanning segment. Residues Leu153 to Val170 are Vacuolar-facing. Residues Thr171–Arg191 traverse the membrane as a helical segment. Topologically, residues Ser192–Ala329 are cytoplasmic. Residues Leu330–Ile350 traverse the membrane as a helical segment. The region spanning Leu338 to Gln632 is the ABC transmembrane type-1 1 domain. Topologically, residues Val351–Ala379 are vacuolar. Asn370 carries an N-linked (GlcNAc...) asparagine glycan. A helical membrane pass occupies residues Trp380–Gly400. Residues Gln401–Tyr465 are Cytoplasmic-facing. The helical transmembrane segment at Leu466–Phe486 threads the bilayer. The Vacuolar portion of the chain corresponds to Leu487–Val489. The chain crosses the membrane as a helical span at residues Ser490–Asn510. Residues Leu511 to Ser572 are Cytoplasmic-facing. Residues Val573–Cys593 traverse the membrane as a helical segment. The Vacuolar segment spans residues Thr594–Thr614. Residues Leu615–Val635 form a helical membrane-spanning segment. Residues Ser636–Ile989 lie on the Cytoplasmic side of the membrane. The ABC transporter 1 domain maps to Ile664–Leu908. An ATP-binding site is contributed by Gly702 to Ser709. The ABC transmembrane type-1 2 domain occupies Leu981–Met1282. The helical transmembrane segment at Thr990–Asn1010 threads the bilayer. At Val1011–Ile1051 the chain is on the vacuolar side. Residues Gln1052–Arg1072 form a helical membrane-spanning segment. Residues Lys1073 to Pro1115 lie on the Cytoplasmic side of the membrane. A helical transmembrane segment spans residues Tyr1116–Val1136. A topological domain (vacuolar) is located at residue Ile1137. The chain crosses the membrane as a helical span at residues Thr1138 to Trp1158. Topologically, residues Tyr1159–Val1229 are cytoplasmic. Residues Asp1230–Asn1250 form a helical membrane-spanning segment. Over Ile1251–Asp1252 the chain is Vacuolar. Residues Ser1253–Leu1273 traverse the membrane as a helical segment. Topologically, residues Val1274–Lys1592 are cytoplasmic. One can recognise an ABC transporter 2 domain in the interval Ile1323–Arg1572. Position 1357-1364 (Gly1357–Ser1364) interacts with ATP.

The protein belongs to the ABC transporter superfamily. ABC transporter which may be involved in multidrug resistance.

It is found in the vacuole membrane. In Saccharomyces cerevisiae (strain ATCC 204508 / S288c) (Baker's yeast), this protein is ABC transporter ATP-binding protein/permease VMR1 (VMR1).